Reading from the N-terminus, the 818-residue chain is Exchange factor for Arf-6 (818 aa).

Disordered stretches follow at residues 92–123 (AQKLSRLPVPVSTSQIERRGSLARKTSEESSP), 137–168 (MESTDVEESEEETVMMTTDEKENQKKPNENDD), 208–291 (NHHH…GVSN), and 326–383 (RTTP…VGGE). The span at 107–119 (IERRGSLARKTSE) shows a compositional bias: basic and acidic residues. Acidic residues predominate over residues 140-149 (TDVEESEEET). Residues 154-165 (TDEKENQKKPNE) are compositionally biased toward basic and acidic residues. 2 stretches are compositionally biased toward polar residues: residues 213 to 223 (YNSSPQISTLS) and 255 to 269 (MSNNSHQQSFRSPEN). Residues 326–347 (RTTPNTAASNSSASASPSLHAT) are compositionally biased toward low complexity. The SEC7 domain maps to 356-532 (GVSLRSAESS…KTLFQSIKDN (177 aa)). Polar residues predominate over residues 361–380 (SAESSNLNQTAVPSTSTNSV). The PH domain occupies 569 to 681 (VEYYSGFLMR…WCEKINFVAA (113 aa)). Positions 782–799 (TMNIMMTPTRRQQQNQKP) are enriched in polar residues. Residues 782-818 (TMNIMMTPTRRQQQNQKPVVSEDRLSYTDAVNGAAAH) form a disordered region.

As to quaternary structure, interacts (via short N-terminal region) with microtubule-associated proteins tac-1 and zyg-8.

It localises to the cytoplasm. The protein resides in the cell cortex. It is found in the cell membrane. Functionally, guanine nucleotide exchange factor for arf-6. Involved in response to injury in mechanosensory neurons. Inhibits axon regrowth via microtubule dynamics, possibly by inducing axonal microtubule catastrophes. Limits microtubule growth near the cellular cortex of early embryonic cells. In Caenorhabditis elegans, this protein is Exchange factor for Arf-6.